Reading from the N-terminus, the 2626-residue chain is Unconventional myosin-IXa (2626 aa).

The 99-residue stretch at 14 to 112 (NEHTLRIYPG…YRFLLREKNL (99 aa)) folds into the Ras-associating domain. The 872-residue stretch at 146–1017 (KDFDDLCSLP…ERQHLQDLLH (872 aa)) folds into the Myosin motor domain. The helical transmembrane segment at 175–195 (IYTYVGSILIAINPFKFLPIY) threads the bilayer. ATP is bound at residue 239–246 (GESGSGKT). Ser755 is subject to Phosphoserine. The segment at 908–919 (QAEPYFVKCIRS) is actin-binding. 5 IQ domains span residues 1021–1041 (LRRI…QQFL), 1043–1072 (LRQA…EKDA), 1075–1104 (MASA…AAVI), 1116–1145 (RHRA…KIIL), and 1139–1168 (QRNK…ERLK). The neck or regulatory domain stretch occupies residues 1022 to 1163 (RRIILLQRWF…RARQRYKALK (142 aa)). The segment at 1164 to 2589 (EERLKETKLE…LKNVKNSPQK (1426 aa)) is tail. Basic and acidic residues predominate over residues 1221–1240 (RESSMDFSKESPDKQQERGR). The segment at 1221–1276 (RESSMDFSKESPDKQQERGRSQSGTDLQGDVIVRQRPKSLEDLHQKKVGRAKRESR) is disordered. Phosphoserine is present on Ser1243. Thr1245 is subject to Phosphothreonine. Ser1259 is subject to Phosphoserine. A coiled-coil region spans residues 1265–1292 (QKKVGRAKRESRRMRELEQAIFSLELLK). Residues 1266–1276 (KKVGRAKRESR) are compositionally biased toward basic residues. Ser1300 and Ser1318 each carry phosphoserine. The span at 1360 to 1375 (PSTFTNPKFDSQNNAL) shows a compositional bias: polar residues. The segment at 1360-1397 (PSTFTNPKFDSQNNALSASSETSSTFSGKGASSDSEHL) is disordered. A compositionally biased stretch (low complexity) spans 1376-1386 (SASSETSSTFS). The stretch at 1493–1540 (TVLKKLEKLNIEKEKRQKQLQQQNEKEMMEQIRQQTDILEKERKAFKT) forms a coiled coil. 5 disordered regions span residues 1562 to 1602 (VERP…PPKD), 1618 to 1673 (SRTV…SRPI), 1689 to 1726 (GNPQ…RMAR), 1765 to 1784 (SELG…SEMT), and 1872 to 1907 (QYHP…KRGV). 2 stretches are compositionally biased toward basic and acidic residues: residues 1620-1632 (TVKE…RMGT) and 1659-1669 (HRSDDPSREGS). The span at 1716-1726 (PAHKKKARMAR) shows a compositional bias: basic residues. Residues 1772 to 1784 (SLGQASHSDSEMT) show a composition bias toward polar residues. Over residues 1887–1899 (CRKEFKENKEPSP) the composition is skewed to basic and acidic residues. A Phosphoserine modification is found at Ser2016. The segment at 2067–2116 (GHMFKATQYSIPTYCEYCSSLIWIMDRASVCKLCKYACHKKCCLKTTAKC) adopts a Phorbol-ester/DAG-type zinc-finger fold. Positions 2131–2319 (VELSRLTSED…LIVVEQMNKY (189 aa)) constitute a Rho-GAP domain. A disordered region spans residues 2365–2385 (SGKGRLHRGSHPNPSSPVIVR). A Phosphoserine modification is found at Ser2380. A coiled-coil region spans residues 2408–2444 (TDQQQAAMQQEEKVLTEQIENLQKEKEELTFEMLVLE). The disordered stretch occupies residues 2449-2527 (DDEALESEAS…NTTSSHGTRK (79 aa)). The span at 2504–2522 (SLDSVSSSVSSCLSNTTSS) shows a compositional bias: low complexity. Phosphoserine is present on Ser2542. Residues 2552–2614 (PLGQAKSLED…TVDSDCSSTQ (63 aa)) are disordered.

It belongs to the TRAFAC class myosin-kinesin ATPase superfamily. Myosin family. In terms of processing, phosphorylated by ALPK1 following monosodium urate monohydrate (MSU)-induced inflammation. In terms of tissue distribution, expressed at high levels in brain, followed by testis and spleen. Expressed at very low levels, in kidney. Detected abundantly in brain and testis and at lower levels in adrenal gland, kidney, lung and spleen (at protein level). In adrenal gland it is mostly found in the medulla but not in the cortex. In brain, it is found in the cerebellum and the CA2-CA3 regions of the hippocampus.

Its subcellular location is the membrane. It localises to the cytoplasm. It is found in the synapse. The protein resides in the cell projection. The protein localises to the growth cone. In terms of biological role, myosins are actin-based motor molecules with ATPase activity. Unconventional myosins serve in intracellular movements. Regulates Rho by stimulating it's GTPase activity in neurons. Required for the regulation of neurite branching and motor neuron axon guidance. This Rattus norvegicus (Rat) protein is Unconventional myosin-IXa (Myo9a).